A 363-amino-acid polypeptide reads, in one-letter code: tRNA(Met) cytidine acetate ligase (363 aa).

ATP-binding positions include 7–20 (IAEFNPFHNGHKYL), Gly96, Asn152, and Arg175.

Belongs to the TmcAL family.

It localises to the cytoplasm. The catalysed reaction is cytidine(34) in elongator tRNA(Met) + acetate + ATP = N(4)-acetylcytidine(34) in elongator tRNA(Met) + AMP + diphosphate. In terms of biological role, catalyzes the formation of N(4)-acetylcytidine (ac(4)C) at the wobble position of elongator tRNA(Met), using acetate and ATP as substrates. First activates an acetate ion to form acetyladenylate (Ac-AMP) and then transfers the acetyl group to tRNA to form ac(4)C34. The polypeptide is tRNA(Met) cytidine acetate ligase (Streptococcus thermophilus (strain CNRZ 1066)).